The following is a 129-amino-acid chain: 3-aminoacrylate deaminase RutC (129 aa).

Belongs to the RutC family.

The enzyme catalyses (Z)-3-aminoacrylate + H2O + H(+) = 3-oxopropanoate + NH4(+). Functionally, involved in pyrimidine catabolism. Catalyzes the deamination of 3-aminoacrylate to malonic semialdehyde, a reaction that can also occur spontaneously. RutC may facilitate the reaction and modulate the metabolic fitness, rather than catalyzing essential functions. The chain is 3-aminoacrylate deaminase RutC from Caulobacter vibrioides (strain ATCC 19089 / CIP 103742 / CB 15) (Caulobacter crescentus).